We begin with the raw amino-acid sequence, 2645 residues long: Non-reducing polyketide synthase AC (2645 aa).

Positions alanine 73–methionine 2366 are N-terminal acylcarrier protein transacylase domain (SAT). Residue histidine 260 is the Proton donor/acceptor; for transacylase activity of the active site. The 419-residue stretch at aspartate 416–glutamate 834 folds into the Ketosynthase family 3 (KS3) domain. Residues cysteine 583, histidine 718, and histidine 757 each act as for beta-ketoacyl synthase activity in the active site. Residues cysteine 943 to serine 1252 form a malonyl-CoA:ACP transacylase (MAT) domain region. Residues serine 1324–aspartate 1457 form an N-terminal hotdog fold region. Positions serine 1324–arginine 1637 constitute a PKS/mFAS DH domain. The product template (PT) domain stretch occupies residues phenylalanine 1330–glycine 1641. Histidine 1359 functions as the Proton acceptor; for dehydratase activity in the catalytic mechanism. A C-terminal hotdog fold region spans residues asparagine 1487 to arginine 1637. Catalysis depends on aspartate 1542, which acts as the Proton donor; for dehydratase activity. The span at asparagine 1684–serine 1696 shows a compositional bias: polar residues. The interval asparagine 1684–threonine 1716 is disordered. A compositionally biased stretch (basic residues) spans lysine 1697–threonine 1706. A Carrier domain is found at glycine 1711–arginine 1788. Serine 1748 carries the post-translational modification O-(pantetheine 4'-phosphoryl)serine. Positions glutamine 1794 to glutamate 1805 are enriched in acidic residues. Positions glutamine 1794–alanine 1816 are disordered. Tyrosine 2009 acts as the For methyltransferase activity in catalysis. The methyltransferase (CMeT) domain stretch occupies residues glutamate 2023 to threonine 2197. Residues cysteine 2269–glutamine 2573 form an NADPH-binding (R) domain region.

It participates in mycotoxin biosynthesis. Non-reducing polyketide synthase; part of the gene cluster that mediates the biosynthesis of the selective antifungal agent ascochitine, an o-quinone methide that plays a possible protective role against other microbial competitors in nature and is considered to be important for pathogenicity of legume-associated Didymella species. The pathway probably begins with the synthesis of a keto-aldehyde intermediate by the ascochitine non-reducing polyketide synthase pksAC from successive condensations of 4 malonyl-CoA units, presumably with a simple acetyl-CoA starter unit. Release of the keto-aldehyde intermediate is consistent with the presence of the C-terminal reductive release domain. The HR-PKS (orf7) probably makes a diketide starter unit which is passed to the non-reducing polyketide synthase pksAC for further extension, producing ascochital and ascochitine. The aldehyde dehydrogenase (orf1), the 2-oxoglutarate-dependent dioxygenase (orf3) and the dehydrogenase (orf9) are probably involved in subsequent oxidations of methyl groups to the carboxylic acid of the heterocyclic ring. The ascochitine gene cluster also includes a gene encoding a short peptide (orf2) that is often found in secondary metabolite gene clusters and which function has still to be determined. The chain is Non-reducing polyketide synthase AC from Didymella fabae (Leaf and pod spot disease fungus).